A 419-amino-acid polypeptide reads, in one-letter code: Chalcone synthase D (419 aa).

Residue Cys-164 is part of the active site.

Belongs to the thiolase-like superfamily. Chalcone/stilbene synthases family.

The catalysed reaction is (E)-4-coumaroyl-CoA + 3 malonyl-CoA + 3 H(+) = 2',4,4',6'-tetrahydroxychalcone + 3 CO2 + 4 CoA. It functions in the pathway secondary metabolite biosynthesis; flavonoid biosynthesis. Its function is as follows. The primary product of this enzyme is 4,2',4',6'-tetrahydroxychalcone (also termed naringenin-chalcone or chalcone) which can under specific conditions spontaneously isomerize into naringenin. This chain is Chalcone synthase D (CHSD), found in Petunia hybrida (Petunia).